A 58-amino-acid polypeptide reads, in one-letter code: Large ribosomal subunit protein uL30 (58 aa).

This sequence belongs to the universal ribosomal protein uL30 family. In terms of assembly, part of the 50S ribosomal subunit.

This is Large ribosomal subunit protein uL30 from Bacteroides thetaiotaomicron (strain ATCC 29148 / DSM 2079 / JCM 5827 / CCUG 10774 / NCTC 10582 / VPI-5482 / E50).